The following is a 794-amino-acid chain: Protocadherin beta-6 (794 aa).

The first 27 residues, 1-27, serve as a signal peptide directing secretion; that stretch reads MMQTKVQNKKRQVAFFILLMLWGEVGS. Over 28–688 the chain is Extracellular; sequence ESIQYSVLEE…AQADSLTVYL (661 aa). 5 consecutive Cadherin domains span residues 34 to 132, 137 to 241, 246 to 345, 350 to 449, and 454 to 559; these read VLEE…APEF, MLLK…VPEF, YEAQ…APEL, FISL…APAF, and YTLF…SPFV. A glycan (N-linked (GlcNAc...) asparagine) is linked at asparagine 46. Residues cysteine 95 and cysteine 101 are joined by a disulfide bond. Asparagine 183 carries N-linked (GlcNAc...) asparagine glycosylation. Asparagine 416 carries N-linked (GlcNAc...) asparagine glycosylation. Asparagine 565 is a glycosylation site (N-linked (GlcNAc...) asparagine). In terms of domain architecture, Cadherin 6 spans 566–669; the sequence is GSAPCTELVP…LVDGFSQPYL (104 aa). The helical transmembrane segment at 689–709 threads the bilayer; that stretch reads VVALASVSSLFLFSVLLFVAV. The Cytoplasmic segment spans residues 710-794; sequence RLCRRSRAAS…PTSRNSFPFS (85 aa). The segment at 773-794 is disordered; it reads PPQGTEREMEETPTSRNSFPFS. The segment covering 784–794 has biased composition (polar residues); the sequence is TPTSRNSFPFS.

In terms of assembly, forms homodimers in trans (molecules expressed by two different cells). Forms promiscuous heterodimers in cis (at the plasma membrane of the same cell) with other protocadherins.

The protein localises to the cell membrane. In terms of biological role, calcium-dependent cell-adhesion protein involved in cells self-recognition and non-self discrimination. Thereby, it is involved in the establishment and maintenance of specific neuronal connections in the brain. The chain is Protocadherin beta-6 from Homo sapiens (Human).